We begin with the raw amino-acid sequence, 371 residues long: Anhydro-N-acetylmuramic acid kinase (371 aa).

9–16 (GTSLDAVD) contacts ATP.

The protein belongs to the anhydro-N-acetylmuramic acid kinase family.

It carries out the reaction 1,6-anhydro-N-acetyl-beta-muramate + ATP + H2O = N-acetyl-D-muramate 6-phosphate + ADP + H(+). It functions in the pathway amino-sugar metabolism; 1,6-anhydro-N-acetylmuramate degradation. It participates in cell wall biogenesis; peptidoglycan recycling. Its function is as follows. Catalyzes the specific phosphorylation of 1,6-anhydro-N-acetylmuramic acid (anhMurNAc) with the simultaneous cleavage of the 1,6-anhydro ring, generating MurNAc-6-P. Is required for the utilization of anhMurNAc either imported from the medium or derived from its own cell wall murein, and thus plays a role in cell wall recycling. This chain is Anhydro-N-acetylmuramic acid kinase, found in Caulobacter vibrioides (strain ATCC 19089 / CIP 103742 / CB 15) (Caulobacter crescentus).